Consider the following 368-residue polypeptide: Germination protease (368 aa).

Positions 1–16 (MKNNELDVNQFLIRTD) are excised as a propeptide.

This sequence belongs to the peptidase A25 family. In terms of assembly, homotetramer. Post-translationally, autoproteolytically processed. The inactive tetrameric zymogen termed p46 autoprocesses to a smaller form termed p41, which is active only during spore germination.

It carries out the reaction Endopeptidase action with P4 Glu or Asp, P1 preferably Glu &gt; Asp, P1' hydrophobic and P2' Ala.. Its function is as follows. Initiates the rapid degradation of small, acid-soluble proteins during spore germination. In Bacillus velezensis (strain DSM 23117 / BGSC 10A6 / LMG 26770 / FZB42) (Bacillus amyloliquefaciens subsp. plantarum), this protein is Germination protease.